The chain runs to 146 residues: Large ribosomal subunit protein uL15 (146 aa).

The segment at 1–56 is disordered; that stretch reads MSDIQLNTLKPAEGSKHAKRRVGRGIGSGLGKTAGRGHKGQKSRSGGFHKVGFEGG. Over residues 24–34 the composition is skewed to gly residues; sequence RGIGSGLGKTA.

This sequence belongs to the universal ribosomal protein uL15 family. As to quaternary structure, part of the 50S ribosomal subunit.

Its function is as follows. Binds to the 23S rRNA. This Bordetella bronchiseptica (strain ATCC BAA-588 / NCTC 13252 / RB50) (Alcaligenes bronchisepticus) protein is Large ribosomal subunit protein uL15.